A 210-amino-acid chain; its full sequence is Uracil phosphoribosyltransferase (210 aa).

5-phospho-alpha-D-ribose 1-diphosphate contacts are provided by residues R78, R103, and 130 to 138 (DPMLATGGS). Uracil-binding positions include I193 and 198 to 200 (GDA). Position 199 (D199) interacts with 5-phospho-alpha-D-ribose 1-diphosphate.

The protein belongs to the UPRTase family. Mg(2+) is required as a cofactor.

The catalysed reaction is UMP + diphosphate = 5-phospho-alpha-D-ribose 1-diphosphate + uracil. It functions in the pathway pyrimidine metabolism; UMP biosynthesis via salvage pathway; UMP from uracil: step 1/1. Its activity is regulated as follows. Allosterically activated by GTP. Functionally, catalyzes the conversion of uracil and 5-phospho-alpha-D-ribose 1-diphosphate (PRPP) to UMP and diphosphate. This is Uracil phosphoribosyltransferase from Chromobacterium violaceum (strain ATCC 12472 / DSM 30191 / JCM 1249 / CCUG 213 / NBRC 12614 / NCIMB 9131 / NCTC 9757 / MK).